Consider the following 342-residue polypeptide: GTPase Obg (342 aa).

The Obg domain maps to 1-159; it reads MQFIDRAEIE…RNLRLELKLL (159 aa). An OBG-type G domain is found at 160–328; sequence AEVGIIGLPN…LLQAIWHRLD (169 aa). Residues 166–173, 191–195, 213–216, 280–283, and 309–311 each bind GTP; these read GLPNAGKS, FTTLV, DIPG, NKVD, and SAV. Residues serine 173 and threonine 193 each contribute to the Mg(2+) site.

It belongs to the TRAFAC class OBG-HflX-like GTPase superfamily. OBG GTPase family. As to quaternary structure, monomer. Mg(2+) is required as a cofactor.

The protein resides in the cytoplasm. Functionally, an essential GTPase which binds GTP, GDP and possibly (p)ppGpp with moderate affinity, with high nucleotide exchange rates and a fairly low GTP hydrolysis rate. Plays a role in control of the cell cycle, stress response, ribosome biogenesis and in those bacteria that undergo differentiation, in morphogenesis control. This Crocosphaera subtropica (strain ATCC 51142 / BH68) (Cyanothece sp. (strain ATCC 51142)) protein is GTPase Obg.